Consider the following 554-residue polypeptide: MAIQHPDIQPAVNHSVQVAIAGAGPVGLMMANYLGQMGIDVLVVEKLDKLIDYPRAIGIDDEALRTMQSVGLVENVLPHTTPWHAMRFLTPKGRCFADIQPMTDEFGWPRRNAFIQPQVDAVMLEGLSRFPNVRCLFARELEAFSQQNDEVTLHLKTAEGQRETVKAQWLVACDGGASFVRRTLNVPFEGKTAPNQWIVVDIANDPLSTPHIYLCCDPVRPYVSAALPHAVRRFEFMVMPGETEEQLREPQNMRKLLSKVLPNPDNVELIRQRVYTHNARLAQRFRIDRVLLAGDAAHIMPVWQGQGYNSGMRDAFNLAWKLALVIQGKARDALLDTYQQERRDHAKAMIDLSVTAGNVLAPPKRWQGTLRDGVSWLLNYLPPVKRYFLEMRFKPMPQYYGGALMREGEAKHSPVGKMFIQPKVTLENGDVTLLDNAIGANFAVIGWGCNPLWGMSDEQIQQWRALGTRFIQVVPEVQIHTAQDNHDGVLRVGDTQGRLRSWFAQHNASLVVMRPDRFVAATAIPQTLGKTLNKLASVMTLTRPDADVSVEKVA.

FAD-binding positions include 17-46 (QVAI…VVEK) and 285-295 (FRIDRVLLAGD).

The protein belongs to the PheA/TfdB FAD monooxygenase family. Requires FAD as cofactor.

It catalyses the reaction 3-(3-hydroxyphenyl)propanoate + NADH + O2 + H(+) = 3-(2,3-dihydroxyphenyl)propanoate + NAD(+) + H2O. It carries out the reaction (2E)-3-(3-hydroxyphenyl)prop-2-enoate + NADH + O2 + H(+) = (2E)-3-(2,3-dihydroxyphenyl)prop-2-enoate + NAD(+) + H2O. Its pathway is aromatic compound metabolism; 3-phenylpropanoate degradation. Its function is as follows. Catalyzes the insertion of one atom of molecular oxygen into position 2 of the phenyl ring of 3-(3-hydroxyphenyl)propionate (3-HPP) and hydroxycinnamic acid (3HCI). In Escherichia coli O139:H28 (strain E24377A / ETEC), this protein is 3-(3-hydroxy-phenyl)propionate/3-hydroxycinnamic acid hydroxylase.